A 603-amino-acid chain; its full sequence is NADH-ubiquinone oxidoreductase chain 5 (603 aa).

A run of 16 helical transmembrane segments spans residues 4–24 (YATM…GALI), 38–58 (SIIA…MCLD), 87–107 (MTFI…SLWY), 122–142 (LIFL…QLFI), 144–160 (WEGV…WWYA), 171–191 (AILY…WFLL), 211–233 (TPLL…HPWL), 241–261 (TPVS…FLLI), 272–292 (LIQT…AVCA), 301–320 (IVAF…IGIN), 325–347 (AFLH…GSII), 370–390 (STSL…TGFY), 405–422 (NAWA…TSAY), 457–477 (LTIG…PMST), 482–502 (IPLY…LTAL), and 582–602 (GMIK…LLLI).

This sequence belongs to the complex I subunit 5 family. Core subunit of respiratory chain NADH dehydrogenase (Complex I) which is composed of 45 different subunits.

Its subcellular location is the mitochondrion inner membrane. The enzyme catalyses a ubiquinone + NADH + 5 H(+)(in) = a ubiquinol + NAD(+) + 4 H(+)(out). In terms of biological role, core subunit of the mitochondrial membrane respiratory chain NADH dehydrogenase (Complex I) which catalyzes electron transfer from NADH through the respiratory chain, using ubiquinone as an electron acceptor. Essential for the catalytic activity and assembly of complex I. The sequence is that of NADH-ubiquinone oxidoreductase chain 5 (MT-ND5) from Pan troglodytes (Chimpanzee).